Consider the following 158-residue polypeptide: Glycine/sarcosine/betaine reductase complex component A1 (158 aa).

Residue Sec-46 is part of the active site. Position 46 (Sec-46) is a non-standard amino acid, selenocysteine.

It belongs to the GrdA family. Monomer. Component of the glycine, sarcosine and betaine reductase complexes, together with components B and C.

It carries out the reaction acetyl phosphate + [thioredoxin]-disulfide + NH4(+) + H2O = [thioredoxin]-dithiol + glycine + phosphate + H(+). The enzyme catalyses acetyl phosphate + methylamine + [thioredoxin]-disulfide + H2O = sarcosine + [thioredoxin]-dithiol + phosphate + H(+). The catalysed reaction is acetyl phosphate + trimethylamine + [thioredoxin]-disulfide + H2O = glycine betaine + [thioredoxin]-dithiol + phosphate + H(+). Functionally, in the first step of glycine, betaine and sarcosine reductases, the substrate is bound to component PB via a Schiff base intermediate. Then the PB-activated substrate is nucleophilically attacked by the selenol anion of component PA to transform it to a carboxymethylated selenoether and the respective amine. By action of component PC, acetyl phosphate is formed, leaving component PA in its oxidized state. Finally component PA becomes reduced by the thioredoxin system to start a new catalytic cycle of reductive deamination. This chain is Glycine/sarcosine/betaine reductase complex component A1 (grdA1), found in Photobacterium profundum (strain SS9).